Here is a 348-residue protein sequence, read N- to C-terminus: NADH-ubiquinone oxidoreductase chain 2 (348 aa).

Helical transmembrane passes span 13–33, 60–80, 96–116, 124–144, 150–170, 200–220, 241–261, 278–298, and 325–345; these read VITG…WAGL, FLAQ…NNLL, PLAM…HFWV, PLTS…SIMY, INTH…SWGG, TITT…FLTL, LMPL…LTGF, IIPT…MRLI, and LFIP…PLIL.

Belongs to the complex I subunit 2 family. As to quaternary structure, core subunit of respiratory chain NADH dehydrogenase (Complex I) which is composed of 45 different subunits. Interacts with TMEM242.

Its subcellular location is the mitochondrion inner membrane. It carries out the reaction a ubiquinone + NADH + 5 H(+)(in) = a ubiquinol + NAD(+) + 4 H(+)(out). Its function is as follows. Core subunit of the mitochondrial membrane respiratory chain NADH dehydrogenase (Complex I) which catalyzes electron transfer from NADH through the respiratory chain, using ubiquinone as an electron acceptor. Essential for the catalytic activity and assembly of complex I. The chain is NADH-ubiquinone oxidoreductase chain 2 from Papio hamadryas (Hamadryas baboon).